Reading from the N-terminus, the 231-residue chain is ATP-dependent dethiobiotin synthetase BioD (231 aa).

12–17 serves as a coordination point for ATP; sequence EVGKTV. Threonine 16 is a Mg(2+) binding site. Residue lysine 37 is part of the active site. Residue serine 41 coordinates substrate. Residues aspartate 51, 112–115, and 202–204 contribute to the ATP site; these read EGAG and PKL. Positions 51 and 112 each coordinate Mg(2+).

This sequence belongs to the dethiobiotin synthetase family. In terms of assembly, homodimer. Mg(2+) serves as cofactor.

The protein localises to the cytoplasm. It catalyses the reaction (7R,8S)-7,8-diammoniononanoate + CO2 + ATP = (4R,5S)-dethiobiotin + ADP + phosphate + 3 H(+). Its pathway is cofactor biosynthesis; biotin biosynthesis; biotin from 7,8-diaminononanoate: step 1/2. Its function is as follows. Catalyzes a mechanistically unusual reaction, the ATP-dependent insertion of CO2 between the N7 and N8 nitrogen atoms of 7,8-diaminopelargonic acid (DAPA, also called 7,8-diammoniononanoate) to form a ureido ring. The protein is ATP-dependent dethiobiotin synthetase BioD of Bacillus subtilis (strain 168).